A 211-amino-acid chain; its full sequence is Small ribosomal subunit protein uS3 (211 aa).

One can recognise a KH type-2 domain in the interval 38–106 (LRSFVKKTFH…DVELHIVEVK (69 aa)).

Belongs to the universal ribosomal protein uS3 family. Part of the 30S ribosomal subunit. Forms a tight complex with proteins S10 and S14.

Its function is as follows. Binds the lower part of the 30S subunit head. Binds mRNA in the 70S ribosome, positioning it for translation. The polypeptide is Small ribosomal subunit protein uS3 (Anaplasma marginale (strain Florida)).